Reading from the N-terminus, the 179-residue chain is Cytochrome c-type biogenesis protein CcmE (179 aa).

The Cytoplasmic segment spans residues 1–8 (MNPRRKSR). The helical; Signal-anchor for type II membrane protein transmembrane segment at 9 to 29 (LTIILFVLLGVTIASSLVLYA) threads the bilayer. Topologically, residues 30 to 179 (LRQNIDLFYT…AVNSVEEGKK (150 aa)) are periplasmic. Heme is bound by residues His131 and Tyr135. 2 stretches are compositionally biased toward basic and acidic residues: residues 138 to 148 (PDLSEKMEQVH) and 161 to 179 (ESDR…EGKK). Residues 138–179 (PDLSEKMEQVHKPMGISNQDMQGESDRDRLDKAVNSVEEGKK) are disordered.

This sequence belongs to the CcmE/CycJ family.

It is found in the cell inner membrane. Heme chaperone required for the biogenesis of c-type cytochromes. Transiently binds heme delivered by CcmC and transfers the heme to apo-cytochromes in a process facilitated by CcmF and CcmH. The protein is Cytochrome c-type biogenesis protein CcmE of Mannheimia succiniciproducens (strain KCTC 0769BP / MBEL55E).